The following is a 90-amino-acid chain: Acylphosphatase (90 aa).

Positions 3–90 (RYSAIVQGRV…DGEKKFSIKY (88 aa)) constitute an Acylphosphatase-like domain. Residues Arg-18 and Asn-36 contribute to the active site.

It belongs to the acylphosphatase family.

It carries out the reaction an acyl phosphate + H2O = a carboxylate + phosphate + H(+). This Clostridium beijerinckii (strain ATCC 51743 / NCIMB 8052) (Clostridium acetobutylicum) protein is Acylphosphatase (acyP).